We begin with the raw amino-acid sequence, 79 residues long: D-alanyl carrier protein (79 aa).

Residues 1–77 (MDTKQGVLDI…KIVAKVESLE (77 aa)) enclose the Carrier domain. At Ser-35 the chain carries O-(pantetheine 4'-phosphoryl)serine.

The protein belongs to the DltC family. 4'-phosphopantetheine is transferred from CoA to a specific serine of apo-DCP.

It is found in the cytoplasm. It participates in cell wall biogenesis; lipoteichoic acid biosynthesis. Its function is as follows. Carrier protein involved in the D-alanylation of lipoteichoic acid (LTA). The loading of thioester-linked D-alanine onto DltC is catalyzed by D-alanine--D-alanyl carrier protein ligase DltA. The DltC-carried D-alanyl group is further transferred to cell membrane phosphatidylglycerol (PG) by forming an ester bond, probably catalyzed by DltD. D-alanylation of LTA plays an important role in modulating the properties of the cell wall in Gram-positive bacteria, influencing the net charge of the cell wall. The polypeptide is D-alanyl carrier protein (Lactobacillus helveticus (strain DPC 4571)).